We begin with the raw amino-acid sequence, 146 residues long: Snaclec jerdonibitin subunit beta (146 aa).

An N-terminal signal peptide occupies residues 1-23 (MGRFIFVSFGLLVVFLSLSGTGA). 3 disulfides stabilise this stretch: Cys-25/Cys-36, Cys-53/Cys-142, and Cys-119/Cys-134. Residues 32 to 143 (YEGHCYRVFQ…CSKTYPFVCK (112 aa)) form the C-type lectin domain.

It belongs to the snaclec family. As to quaternary structure, heterodimer of subunits alpha and beta; disulfide-linked. As to expression, expressed by the venom gland.

The protein localises to the secreted. In terms of biological role, snaclec that dose-dependently inhibits platelet aggregation induced by ristocetin or low-dose thrombin, but not by high-dose thrombin. Binds to GPIbalpha (GP1BA). In vivo, also dose-dependently induces thrombocytopenia of mice and platelet counts remains at very low level even after 18 hours intravenous injection. This chain is Snaclec jerdonibitin subunit beta, found in Protobothrops jerdonii (Jerdon's pitviper).